The primary structure comprises 89 residues: Small ribosomal subunit protein uS15 (89 aa).

The protein belongs to the universal ribosomal protein uS15 family. As to quaternary structure, part of the 30S ribosomal subunit. Forms a bridge to the 50S subunit in the 70S ribosome, contacting the 23S rRNA.

Its function is as follows. One of the primary rRNA binding proteins, it binds directly to 16S rRNA where it helps nucleate assembly of the platform of the 30S subunit by binding and bridging several RNA helices of the 16S rRNA. In terms of biological role, forms an intersubunit bridge (bridge B4) with the 23S rRNA of the 50S subunit in the ribosome. This Lacticaseibacillus casei (strain BL23) (Lactobacillus casei) protein is Small ribosomal subunit protein uS15.